Reading from the N-terminus, the 251-residue chain is V-set and transmembrane domain-containing protein 2B (251 aa).

An N-terminal signal peptide occupies residues 1-25; sequence MEKQGLFSALCYLMLNTPLLFSVNA. The Ig-like V-type domain maps to 26–142; it reads TFTEVPKDVT…DETQEHKAQA (117 aa). Residues 26–226 lie on the Extracellular side of the membrane; that stretch reads TFTEVPKDVT…RQQHGSGTGP (201 aa). A disulfide bond links C46 and C125. The interval 157-213 is disordered; that stretch reads AAEAVSHIQSSGPRRNNPSSRATPEPGNKRAVPPAENLAPSLSTAASSSASPAPGKA. Low complexity-rich tracts occupy residues 166 to 177 and 195 to 213; these read SSGPRRNNPSSR and APSL…PGKA. The chain crosses the membrane as a helical span at residues 227–247; it reads IFANDPALYMFLLIFHQLVYL. Topologically, residues 248–251 are cytoplasmic; that stretch reads LLNH.

Its subcellular location is the membrane. The sequence is that of V-set and transmembrane domain-containing protein 2B (vstm2b) from Xenopus tropicalis (Western clawed frog).